Consider the following 1663-residue polypeptide: Cortactin-binding protein 2 (1663 aa).

Disordered regions lie at residues 1 to 23 (MATD…AGAA), 203 to 222 (KKKT…RSTE), 352 to 440 (ARPG…LHPG), 454 to 478 (GNAN…SPTS), and 498 to 616 (RFTS…PKPS). Residues 119-276 (KKMQERMSAQ…EQLKRGSDSK (158 aa)) are a coiled coil. The segment covering 384-396 (NGPSTGSTPDPTS) has biased composition (low complexity). A compositionally biased stretch (polar residues) spans 411 to 422 (QTPGIAPQNSQA). Residue arginine 498 is modified to Asymmetric dimethylarginine. Positions 583–593 (TVASPPSSLPQ) are enriched in polar residues. ANK repeat units lie at residues 709–739 (GRPT…DINY), 743–772 (DGHS…QVNA), 776–805 (NGFT…NINH), 809–838 (GGQT…NRSV), and 842–871 (DGWT…LARG). Positions 876 to 897 (EEGSESSVFDLDGGEESPEGIS) are disordered. One copy of the ANK 6 repeat lies at 912 to 942 (EGWTAAHIAASKGFKNCLEILCRHGGLEPER). The interval 1446 to 1485 (NKKKGESGAWRKVNTSPRRKSGRFSLPTWNKPDLSTEGMK) is disordered. Serine 1524 is subject to Phosphoserine. Disordered stretches follow at residues 1580-1602 (SQKE…KSKT) and 1615-1663 (VPRS…KPNK). The segment covering 1582–1599 (KEVSPLSSHQTTECSNSK) has biased composition (polar residues). Residues 1624–1638 (SQNTKRSSSSSNTRQ) are compositionally biased toward low complexity. Over residues 1645–1663 (SKEENWNLHKNEHLEKPNK) the composition is skewed to basic and acidic residues.

In terms of assembly, interacts with CTTN/cortactin SH3 domain. Interacts with STRN, STRN4/zinedin and MOB4/phocein; this interactions mediate the association with the STRIPAK core complex and may regulate dendritic spine distribution of the STRIPAK complex in hippocampal neurons. Activation of glutamate receptors weakens the interaction with STRN and STRN4.

The protein localises to the cytoplasm. It is found in the cell cortex. Its subcellular location is the cell projection. It localises to the dendritic spine. Functionally, regulates the dendritic spine distribution of CTTN/cortactin in hippocampal neurons, and thus controls dendritic spinogenesis and dendritic spine maintenance. Associates with the striatin-interacting phosphatase and kinase (STRIPAK) core complex to regulate dendritic spine distribution of the STRIPAK complex in hippocampal neurons. The polypeptide is Cortactin-binding protein 2 (CTTNBP2) (Nomascus leucogenys (Northern white-cheeked gibbon)).